The primary structure comprises 425 residues: Protein CLP1 homolog (425 aa).

Residues E18, K59, and 121–126 (DVGKST) each bind ATP.

This sequence belongs to the Clp1 family. Clp1 subfamily.

The protein localises to the nucleus. Required for endonucleolytic cleavage during polyadenylation-dependent pre-mRNA 3'-end formation. This chain is Protein CLP1 homolog (cbc), found in Drosophila pseudoobscura pseudoobscura (Fruit fly).